The primary structure comprises 606 residues: Limonene synthase, chloroplastic (606 aa).

The N-terminal 38 residues, Met1 to Ala38, are a transit peptide targeting the chloroplast. (2E)-geranyl diphosphate-binding residues include Arg320, Asp357, Asp361, Arg497, and Asp500. Mg(2+) is bound by residues Asp357 and Asp361. A DDXXD motif motif is present at residues Asp357–Asp361. Positions 500, 504, and 508 each coordinate Mg(2+).

It belongs to the terpene synthase family. Tpsb subfamily. As to quaternary structure, monomer. Mg(2+) is required as a cofactor. The cofactor is Mn(2+). As to expression, confined to fruits.

It localises to the plastid. Its subcellular location is the chloroplast. It carries out the reaction (2E,6E)-farnesyl diphosphate = (E)-beta-farnesene + diphosphate. It catalyses the reaction (2E)-geranyl diphosphate = limonene + diphosphate. The enzyme catalyses (2E)-geranyl diphosphate = beta-pinene + diphosphate. The catalysed reaction is (2E)-geranyl diphosphate = sabinene + diphosphate. It carries out the reaction (2E)-geranyl diphosphate = beta-myrcene + diphosphate. It catalyses the reaction (2E)-geranyl diphosphate = alpha-pinene + diphosphate. The enzyme catalyses (2E)-geranyl diphosphate = terpinolene + diphosphate. It participates in secondary metabolite biosynthesis; terpenoid biosynthesis. Monoterpene synthase (mono-TPS) involved in the biosynthesis of monoterpenes natural products, constituent of coffee beverage aroma. Catalyzes the conversion of (2E)-geranyl diphosphate (GPP) into limonene, beta-pinene, sabinene and beta-myrcene, and, as minor products, alpha-pinene and alpha-terpinolene. Can also, with a low efficiency, use farnesyl pyrophosphate (FPP) as substrate to produce beta-farnesene. Not able to use geranylgeranyl pyrophosphate (GGPP) as substrate. The polypeptide is Limonene synthase, chloroplastic (Coffea arabica (Arabian coffee)).